A 384-amino-acid chain; its full sequence is 8-amino-7-oxononanoate synthase (384 aa).

Arg-21 contacts substrate. 108 to 109 (GF) serves as a coordination point for pyridoxal 5'-phosphate. His-133 serves as a coordination point for substrate. Pyridoxal 5'-phosphate is bound by residues Ser-179, His-207, and Thr-233. Lys-236 bears the N6-(pyridoxal phosphate)lysine mark. Thr-352 contributes to the substrate binding site.

This sequence belongs to the class-II pyridoxal-phosphate-dependent aminotransferase family. BioF subfamily. Homodimer. The cofactor is pyridoxal 5'-phosphate.

It catalyses the reaction 6-carboxyhexanoyl-[ACP] + L-alanine + H(+) = (8S)-8-amino-7-oxononanoate + holo-[ACP] + CO2. Its pathway is cofactor biosynthesis; biotin biosynthesis. Catalyzes the decarboxylative condensation of pimeloyl-[acyl-carrier protein] and L-alanine to produce 8-amino-7-oxononanoate (AON), [acyl-carrier protein], and carbon dioxide. The chain is 8-amino-7-oxononanoate synthase from Shigella sonnei (strain Ss046).